We begin with the raw amino-acid sequence, 312 residues long: Ribosomal RNA small subunit methyltransferase H (312 aa).

S-adenosyl-L-methionine-binding positions include glycine 33–histidine 35, aspartate 53, phenylalanine 80, aspartate 102, and glutamine 109.

It belongs to the methyltransferase superfamily. RsmH family.

The protein resides in the cytoplasm. The catalysed reaction is cytidine(1402) in 16S rRNA + S-adenosyl-L-methionine = N(4)-methylcytidine(1402) in 16S rRNA + S-adenosyl-L-homocysteine + H(+). Specifically methylates the N4 position of cytidine in position 1402 (C1402) of 16S rRNA. The chain is Ribosomal RNA small subunit methyltransferase H from Heliobacterium mobile (Heliobacillus mobilis).